A 286-amino-acid chain; its full sequence is MIGKPRGRRGVNLQILPSAMTVLSICAGLTAIKFALEHQPKAAMALIAAAAILDGLDGRVARILDAQSRMGAEIDSLADAVNFGVTPALVLYVSMLSKWPVGWVVVLLYAVCVVLRLARYNALQDDGTQPAYAHEFFVGMPAPAGAVSMIGLLALKMQFGEGWWTSGWFLSFWVTGTSILLVSGIPMKKMHAVSVPPNYAAALLAVLAICAAAAVLAPYLLIWVIIIAYMCHIPFAVRSQRWLAQHPEVWDDKPKQRRAVRRASRRAHPYRPSMARLGLRKPGRRL.

The next 6 helical transmembrane spans lie at 15-35 (ILPS…IKFA), 74-94 (IDSL…LYVS), 95-115 (MLSK…CVVL), 135-155 (EFFV…LLAL), 167-187 (GWFL…GIPM), and 207-227 (LAIC…VIII).

This sequence belongs to the CDP-alcohol phosphatidyltransferase class-I family.

Its subcellular location is the cell membrane. It carries out the reaction a CDP-1,2-diacyl-sn-glycerol + L-serine = a 1,2-diacyl-sn-glycero-3-phospho-L-serine + CMP + H(+). This Mycobacterium tuberculosis (strain ATCC 25618 / H37Rv) protein is CDP-diacylglycerol--serine O-phosphatidyltransferase (pssA).